The primary structure comprises 234 residues: Purine nucleoside phosphorylase DeoD-type (234 aa).

Histidine 4 serves as a coordination point for a purine D-ribonucleoside. Phosphate contacts are provided by residues glycine 20, arginine 24, arginine 43, and 87-90 (RVGT). A purine D-ribonucleoside contacts are provided by residues glutamate 162, 178–180 (EME), and 202–203 (SD). Aspartate 203 acts as the Proton donor in catalysis.

The protein belongs to the PNP/UDP phosphorylase family. In terms of assembly, homohexamer; trimer of homodimers.

It catalyses the reaction a purine D-ribonucleoside + phosphate = a purine nucleobase + alpha-D-ribose 1-phosphate. The catalysed reaction is a purine 2'-deoxy-D-ribonucleoside + phosphate = a purine nucleobase + 2-deoxy-alpha-D-ribose 1-phosphate. Catalyzes the reversible phosphorolytic breakdown of the N-glycosidic bond in the beta-(deoxy)ribonucleoside molecules, with the formation of the corresponding free purine bases and pentose-1-phosphate. In Anoxybacillus flavithermus (strain DSM 21510 / WK1), this protein is Purine nucleoside phosphorylase DeoD-type.